Here is a 314-residue protein sequence, read N- to C-terminus: 2,3-dihydroxyphenylpropionate/2,3-dihydroxicinnamic acid 1,2-dioxygenase (314 aa).

The Proton donor role is filled by His-115. His-179 acts as the Proton acceptor in catalysis.

This sequence belongs to the LigB/MhpB extradiol dioxygenase family. In terms of assembly, homotetramer. Fe(2+) serves as cofactor.

It catalyses the reaction 3-(2,3-dihydroxyphenyl)propanoate + O2 = (2Z,4E)-2-hydroxy-6-oxonona-2,4-dienedioate + H(+). The enzyme catalyses (2E)-3-(2,3-dihydroxyphenyl)prop-2-enoate + O2 = (2Z,4E,7E)-2-hydroxy-6-oxonona-2,4,7-trienedioate + H(+). Its pathway is aromatic compound metabolism; 3-phenylpropanoate degradation. Its function is as follows. Catalyzes the non-heme iron(II)-dependent oxidative cleavage of 2,3-dihydroxyphenylpropionic acid and 2,3-dihydroxicinnamic acid into 2-hydroxy-6-ketononadienedioate and 2-hydroxy-6-ketononatrienedioate, respectively. This Escherichia coli O157:H7 protein is 2,3-dihydroxyphenylpropionate/2,3-dihydroxicinnamic acid 1,2-dioxygenase.